Consider the following 128-residue polypeptide: Large ribosomal subunit protein uL18 (128 aa).

This sequence belongs to the universal ribosomal protein uL18 family. In terms of assembly, part of the 50S ribosomal subunit; part of the 5S rRNA/L5/L18/L25 subcomplex. Contacts the 5S and 23S rRNAs.

In terms of biological role, this is one of the proteins that bind and probably mediate the attachment of the 5S RNA into the large ribosomal subunit, where it forms part of the central protuberance. In Acidothermus cellulolyticus (strain ATCC 43068 / DSM 8971 / 11B), this protein is Large ribosomal subunit protein uL18.